The chain runs to 194 residues: Ribonuclease HII (194 aa).

The RNase H type-2 domain occupies 16–194 (CIVAGIDEAG…PYHRRSFRCC (179 aa)). Positions 22, 23, and 113 each coordinate a divalent metal cation.

This sequence belongs to the RNase HII family. It depends on Mn(2+) as a cofactor. Mg(2+) is required as a cofactor.

It is found in the cytoplasm. The catalysed reaction is Endonucleolytic cleavage to 5'-phosphomonoester.. Endonuclease that specifically degrades the RNA of RNA-DNA hybrids. This is Ribonuclease HII from Rickettsia massiliae (strain Mtu5).